The primary structure comprises 125 residues: Holo-[acyl-carrier-protein] synthase (125 aa).

Mg(2+) is bound by residues Asp8 and Glu57.

Belongs to the P-Pant transferase superfamily. AcpS family. The cofactor is Mg(2+).

The protein localises to the cytoplasm. It catalyses the reaction apo-[ACP] + CoA = holo-[ACP] + adenosine 3',5'-bisphosphate + H(+). Its function is as follows. Transfers the 4'-phosphopantetheine moiety from coenzyme A to a Ser of acyl-carrier-protein. This chain is Holo-[acyl-carrier-protein] synthase, found in Neisseria gonorrhoeae (strain ATCC 700825 / FA 1090).